Consider the following 84-residue polypeptide: Three-finger toxin MALT0070C (84 aa).

The first 21 residues, 1–21 (MKTLLLTLVVVTIVCLDLGYT), serve as a signal peptide directing secretion. 4 disulfides stabilise this stretch: C24–C43, C36–C60, C64–C71, and C72–C77.

This sequence belongs to the three-finger toxin family. Short-chain subfamily. Expressed by the venom gland.

The protein localises to the secreted. The polypeptide is Three-finger toxin MALT0070C (Micrurus altirostris (Uruguayan coral snake)).